A 565-amino-acid polypeptide reads, in one-letter code: Mannosyl-oligosaccharide 1,2-alpha-mannosidase (565 aa).

A disulfide bond links Cys-320 and Cys-363. Residue Glu-378 is the Proton donor of the active site. Thr-501 is a Ca(2+) binding site. Composition is skewed to basic and acidic residues over residues 526–538 and 550–565; these read NEKA…KVID and KSAD…EIAG. A disordered region spans residues 526–565; that stretch reads NEKAQMRESKVIDKSNLPEAQPVDKSADQEAKEIIEEIAG.

Belongs to the glycosyl hydrolase 47 family. Requires Ca(2+) as cofactor.

It catalyses the reaction N(4)-(alpha-D-Man-(1-&gt;2)-alpha-D-Man-(1-&gt;2)-alpha-D-Man-(1-&gt;3)-[alpha-D-Man-(1-&gt;2)-alpha-D-Man-(1-&gt;3)-[alpha-D-Man-(1-&gt;2)-alpha-D-Man-(1-&gt;6)]-alpha-D-Man-(1-&gt;6)]-beta-D-Man-(1-&gt;4)-beta-D-GlcNAc-(1-&gt;4)-beta-D-GlcNAc)-L-asparaginyl-[protein] (N-glucan mannose isomer 9A1,2,3B1,2,3) + 4 H2O = N(4)-(alpha-D-Man-(1-&gt;3)-[alpha-D-Man-(1-&gt;3)-[alpha-D-Man-(1-&gt;6)]-alpha-D-Man-(1-&gt;6)]-beta-D-Man-(1-&gt;4)-beta-D-GlcNAc-(1-&gt;4)-beta-D-GlcNAc)-L-asparaginyl-[protein] (N-glucan mannose isomer 5A1,2) + 4 beta-D-mannose. It carries out the reaction N(4)-(alpha-D-Man-(1-&gt;2)-alpha-D-Man-(1-&gt;2)-alpha-D-Man-(1-&gt;3)-[alpha-D-Man-(1-&gt;3)-[alpha-D-Man-(1-&gt;2)-alpha-D-Man-(1-&gt;6)]-alpha-D-Man-(1-&gt;6)]-beta-D-Man-(1-&gt;4)-beta-D-GlcNAc-(1-&gt;4)-beta-D-GlcNAc)-L-asparaginyl-[protein] (N-glucan mannose isomer 8A1,2,3B1,3) + 3 H2O = N(4)-(alpha-D-Man-(1-&gt;3)-[alpha-D-Man-(1-&gt;3)-[alpha-D-Man-(1-&gt;6)]-alpha-D-Man-(1-&gt;6)]-beta-D-Man-(1-&gt;4)-beta-D-GlcNAc-(1-&gt;4)-beta-D-GlcNAc)-L-asparaginyl-[protein] (N-glucan mannose isomer 5A1,2) + 3 beta-D-mannose. It functions in the pathway protein modification; protein glycosylation. Functionally, involved in the maturation of Asn-linked oligosaccharides. Trim a single alpha-1,2-linked mannose residue from Man(9)GlcNAc(2) to produce Man(8)GlcNAc(2). This chain is Mannosyl-oligosaccharide 1,2-alpha-mannosidase (MNS1), found in Candida albicans (Yeast).